Here is an 868-residue protein sequence, read N- to C-terminus: DNA mismatch repair protein MutS (868 aa).

620–627 (GPNMSGKS) is a binding site for ATP.

It belongs to the DNA mismatch repair MutS family.

In terms of biological role, this protein is involved in the repair of mismatches in DNA. It is possible that it carries out the mismatch recognition step. This protein has a weak ATPase activity. This Flavobacterium johnsoniae (strain ATCC 17061 / DSM 2064 / JCM 8514 / BCRC 14874 / CCUG 350202 / NBRC 14942 / NCIMB 11054 / UW101) (Cytophaga johnsonae) protein is DNA mismatch repair protein MutS.